Consider the following 77-residue polypeptide: U8-lycotoxin-Ls1m (77 aa).

An N-terminal signal peptide occupies residues 1-20; the sequence is MKLMIFTGLVLFAIVSLIEA. The propeptide occupies 21 to 26; it reads QAENEK.

This sequence belongs to the neurotoxin 19 (CSTX) family. 08 (U8-Lctx) subfamily. Post-translationally, contains 4 disulfide bonds. Expressed by the venom gland.

The protein resides in the secreted. The sequence is that of U8-lycotoxin-Ls1m from Lycosa singoriensis (Wolf spider).